Reading from the N-terminus, the 378-residue chain is Probable pectin lyase A (378 aa).

The signal sequence occupies residues 1-18 (MKYQDLLAIAGCIANAGA). Disulfide bonds link Cys-81/Cys-100 and Cys-90/Cys-224. Asn-127 is a glycosylation site (N-linked (GlcNAc...) asparagine). Arg-254 is a catalytic residue. Cysteines 321 and 329 form a disulfide.

The protein belongs to the polysaccharide lyase 1 family.

The protein localises to the secreted. The enzyme catalyses Eliminative cleavage of (1-&gt;4)-alpha-D-galacturonan methyl ester to give oligosaccharides with 4-deoxy-6-O-methyl-alpha-D-galact-4-enuronosyl groups at their non-reducing ends.. Its function is as follows. Pectinolytic enzymes consist of four classes of enzymes: pectin lyase, polygalacturonase, pectin methylesterase and rhamnogalacturonase. Among pectinolytic enzymes, pectin lyase is the most important in depolymerization of pectin, since it cleaves internal glycosidic bonds of highly methylated pectins. This is Probable pectin lyase A (pelA) from Aspergillus fumigatus (strain CBS 144.89 / FGSC A1163 / CEA10) (Neosartorya fumigata).